Reading from the N-terminus, the 1801-residue chain is Sperm flagellar protein 2 (1801 aa).

Residues 1–105 (MSEILCQWLN…LLYQLYIALQ (105 aa)) form the Calponin-homology (CH) domain. 2 coiled-coil regions span residues 176-260 (EKFE…KDLQ) and 321-395 (AHEA…TKQA). The tract at residues 632–659 (QDKNELTDTQVPGEAAPQKEGTKSSDFE) is disordered. Coiled coils occupy residues 722 to 748 (NQAK…KAQM) and 869 to 895 (ATEV…SAVS). 2 stretches are compositionally biased toward basic and acidic residues: residues 883–892 (LEEKETEKKS) and 909–918 (EAEKEKEVHQ). Residues 883-949 (LEEKETEKKS…KISVKKSPID (67 aa)) are disordered. Residues 1051 to 1077 (EDLWEDEETKAELHQRVNDLRDRLWDI) are a coiled coil. 2 stretches are compositionally biased toward basic and acidic residues: residues 1233–1250 (RLAE…KEKS) and 1261–1295 (KEKE…AEKK). Disordered regions lie at residues 1233–1304 (RLAE…SPVV), 1651–1695 (KTSI…NANT), and 1781–1801 (SEHA…DEKK). Residues 1252–1286 (QSGTNKKAKKEKEQAKKEKEQAKKEKEQAKKEKEP) are a coiled coil. The interaction with IFT20 stretch occupies residues 1305–1657 (EVSPVTITPE…TAEKTSISSV (353 aa)). Positions 1665-1695 (EAEENSTREELKEEKDERDQKEEEIPENANT) form a coiled coil. The span at 1669–1687 (NSTREELKEEKDERDQKEE) shows a compositional bias: basic and acidic residues.

In terms of assembly, interacts (via C-terminus) with IFT20. Interacts with DYNC1I2. As to expression, predominantly expressed in ciliated tissues such as lung, trachea, testis, brain, and at lower levels in kidney and spleen.

The protein localises to the cell projection. It is found in the cilium. It localises to the flagellum. The protein resides in the cytoplasm. Its subcellular location is the golgi apparatus. Functionally, required for correct axoneme development in spermatozoa. Important for normal development of the manchette and sperm head morphology. Essential for male fertility. Plays a role in localization of the intraflagellar transport protein IFT20 to the manchette, suggesting function as an adapter for dynein-mediated protein transport during spermatogenesis. Also plays a role in bone growth where it seems to be required for normal osteoblast differentiation. The sequence is that of Sperm flagellar protein 2 (Spef2) from Rattus norvegicus (Rat).